Here is a 219-residue protein sequence, read N- to C-terminus: Steroid receptor RNA activator 1 (219 aa).

Disordered regions lie at residues Met-1–Val-90 and Ser-192–Ser-219. Residues Tyr-23–Thr-32 are compositionally biased toward polar residues. Phosphoserine is present on Ser-48. Over residues Ser-55 to Gly-76 the composition is skewed to pro residues. Residues Ser-192 to Ser-203 show a composition bias toward basic and acidic residues. The span at Ala-206–Ser-219 shows a compositional bias: polar residues.

The protein belongs to the SRA1 family. SRA1 RNA exists in a ribonucleoprotein complex containing NCOA1. The RNA also forms a complex with PUS1 and RARG in the nucleus. Interacts with AR. In terms of tissue distribution, expressed in various prostate cancer cell lines.

It is found in the nucleus. It localises to the cytoplasm. Functional RNA which acts as a transcriptional coactivator that selectively enhances steroid receptor-mediated transactivation ligand-independently through a mechanism involving the modulating N-terminal domain (AF-1) of steroid receptors. Also mediates transcriptional coactivation of steroid receptors ligand-dependently through the steroid-binding domain (AF-2). Enhances cellular proliferation and differentiation and promotes apoptosis in vivo. May play a role in tumorigenesis. The sequence is that of Steroid receptor RNA activator 1 from Rattus norvegicus (Rat).